The primary structure comprises 407 residues: Dephospho-CoA kinase (407 aa).

Residues 3 to 204 (RIGLTGGIGA…QPFAHNLAQR (202 aa)) enclose the DPCK domain. Residue 11-16 (GAGKSL) coordinates ATP. Positions 196-407 (PFAHNLAQRQ…EWADAVHWRP (212 aa)) are UPF0157.

In the N-terminal section; belongs to the CoaE family. This sequence in the C-terminal section; belongs to the UPF0157 (GrpB) family.

Its subcellular location is the cytoplasm. It catalyses the reaction 3'-dephospho-CoA + ATP = ADP + CoA + H(+). The protein operates within cofactor biosynthesis; coenzyme A biosynthesis; CoA from (R)-pantothenate: step 5/5. Catalyzes the phosphorylation of the 3'-hydroxyl group of dephosphocoenzyme A to form coenzyme A. The polypeptide is Dephospho-CoA kinase (Mycobacterium bovis (strain ATCC BAA-935 / AF2122/97)).